Consider the following 95-residue polypeptide: Small ribosomal subunit protein bS6 (95 aa).

It belongs to the bacterial ribosomal protein bS6 family.

Binds together with bS18 to 16S ribosomal RNA. This is Small ribosomal subunit protein bS6 from Onion yellows phytoplasma (strain OY-M).